A 192-amino-acid chain; its full sequence is Peptidyl-tRNA hydrolase (192 aa).

A tRNA-binding site is contributed by Tyr17. Catalysis depends on His22, which acts as the Proton acceptor. Tyr68, Asn70, and Asn116 together coordinate tRNA.

It belongs to the PTH family. In terms of assembly, monomer.

Its subcellular location is the cytoplasm. The catalysed reaction is an N-acyl-L-alpha-aminoacyl-tRNA + H2O = an N-acyl-L-amino acid + a tRNA + H(+). In terms of biological role, hydrolyzes ribosome-free peptidyl-tRNAs (with 1 or more amino acids incorporated), which drop off the ribosome during protein synthesis, or as a result of ribosome stalling. Its function is as follows. Catalyzes the release of premature peptidyl moieties from peptidyl-tRNA molecules trapped in stalled 50S ribosomal subunits, and thus maintains levels of free tRNAs and 50S ribosomes. This is Peptidyl-tRNA hydrolase from Mycobacterium sp. (strain JLS).